A 552-amino-acid chain; its full sequence is MTSSRIVRAPRGSELSCKGWAQEAALRMLMNNLDPDVAEDPQNLIVYGGTGKAARNWQCFDAIVRSLQELNDDETLLVQSGKPVAVFRSHRDAPRVLIANSMLVPHWATWENFRELEQAGLTMYGQMTAGSWIYIGTQGILQGTYETLAAIARQHFGGSLRGRWTLTAGLGGMGGAQPLAVTMNDGVALVVEVDRQRMQRRLDTRYLDVAVDTLEEAMTLVDEAVRDGKALSVGLLGNAAEVFGELYKRGVRPDIVTDQTSAHDPLEGYVPAGMSLEQALELRQRDPEEYVKHSTASMVEHVKAMVAFADAGSIVFDYGNNLRGVAKAAGYDRAFAYPGFVPAYIRPLFCEGKGPFRWAALSGDPADIAKTDEALLELFPEDQALHRWIRAAQERVQFQGLPARICWLGYGERAKAGALFNKLVRDGVVSAPIVIGRDHLDCGSVASPNRETEAMRDGSDAIGDWPILNAMINAVNGATWVSVHHGGGVGIGYSLHAGMVIVADGTAEADHRLERVLTSDPGMGVVRHVDAGYDEAIAVAQERNVHIPMLKQ.

Residues 48 to 49 (GG), glutamine 126, 172 to 174 (GMG), glutamate 192, arginine 197, 238 to 239 (NA), 259 to 263 (QTSAH), 269 to 270 (YV), and tyrosine 318 each bind NAD(+). Cysteine 406 is an active-site residue. Residue glycine 488 coordinates NAD(+).

This sequence belongs to the urocanase family. Requires NAD(+) as cofactor.

It localises to the cytoplasm. It catalyses the reaction 4-imidazolone-5-propanoate = trans-urocanate + H2O. The protein operates within amino-acid degradation; L-histidine degradation into L-glutamate; N-formimidoyl-L-glutamate from L-histidine: step 2/3. Its function is as follows. Catalyzes the conversion of urocanate to 4-imidazolone-5-propionate. This is Urocanate hydratase from Herpetosiphon aurantiacus (strain ATCC 23779 / DSM 785 / 114-95).